The sequence spans 196 residues: Phosphoheptose isomerase (196 aa).

Residues methionine 34–proline 192 enclose the SIS domain. Asparagine 49–glycine 51 contributes to the substrate binding site. Residues histidine 58 and glutamine 62 each contribute to the Zn(2+) site. Residues glutamine 62, asparagine 91–aspartate 92, serine 117–serine 119, serine 122, and glutamine 172 contribute to the substrate site. Residues glutamine 172 and histidine 180 each coordinate Zn(2+).

The protein belongs to the SIS family. GmhA subfamily. In terms of assembly, homotetramer. It depends on Zn(2+) as a cofactor.

It localises to the cytoplasm. The enzyme catalyses 2 D-sedoheptulose 7-phosphate = D-glycero-alpha-D-manno-heptose 7-phosphate + D-glycero-beta-D-manno-heptose 7-phosphate. Its pathway is carbohydrate biosynthesis; D-glycero-D-manno-heptose 7-phosphate biosynthesis; D-glycero-alpha-D-manno-heptose 7-phosphate and D-glycero-beta-D-manno-heptose 7-phosphate from sedoheptulose 7-phosphate: step 1/1. Catalyzes the isomerization of sedoheptulose 7-phosphate in D-glycero-D-manno-heptose 7-phosphate. In Colwellia psychrerythraea (strain 34H / ATCC BAA-681) (Vibrio psychroerythus), this protein is Phosphoheptose isomerase.